Consider the following 398-residue polypeptide: uncharacterized protein (398 aa).

K212 is modified (N6-(pyridoxal phosphate)lysine).

The protein belongs to the trans-sulfuration enzymes family. The cofactor is pyridoxal 5'-phosphate.

This is an uncharacterized protein from Schizosaccharomyces pombe (strain 972 / ATCC 24843) (Fission yeast).